The sequence spans 426 residues: COP9 signalosome complex subunit 6 (426 aa).

The region spanning 14–155 (VLLHPLVIMQ…AGTTRKLPLF (142 aa)) is the MPN domain. The interval 320–426 (PVRFKSQHLG…NESDESSQAS (107 aa)) is disordered. The span at 334–347 (ADDDDYFDDEDLEN) shows a compositional bias: acidic residues.

The protein belongs to the peptidase M67A family. CSN6 subfamily. Component of the CSN complex, probably composed of csn-1, csn-2, csn-3, csn-4, csn-5, csn-6 and csn-7. Within the complex it probably interacts directly with csn-2 and csn-4. Interacts with rbx-1.

The protein resides in the cytoplasm. It is found in the nucleus. Component of the COP9 signalosome complex (CSN), a complex involved in various cellular and developmental processes. The CSN complex is an essential regulator of the ubiquitin (Ubl) conjugation pathway by mediating the deneddylation of the cullin subunits of the SCF-type E3 ligase complexes, leading to decrease the Ubl ligase activity of SCF. The CSN complex plays an essential role in embryogenesis and oogenesis and is required to regulate microtubule stability in the early embryo. Mediates mei-3/katanin targeting for degradation at the meiosis to mitosis transition via deneddylation of cul-3. The protein is COP9 signalosome complex subunit 6 (csn-6) of Caenorhabditis elegans.